Reading from the N-terminus, the 341-residue chain is Flap endonuclease 1 (341 aa).

Residues 1-98 (MGVQIGELIP…RELEKRREAR (98 aa)) form an N-domain region. Mg(2+)-binding residues include Asp-27, Asp-80, Glu-152, Glu-154, Asp-173, Asp-175, and Asp-236. Residues 116–258 (EAKKYAMRAT…KALTIVKRTK (143 aa)) form an I-domain region. The interaction with PCNA stretch occupies residues 330-338 (KQSTLESWF).

This sequence belongs to the XPG/RAD2 endonuclease family. FEN1 subfamily. Interacts with PCNA. PCNA stimulates the nuclease activity without altering cleavage specificity. Mg(2+) is required as a cofactor.

In terms of biological role, structure-specific nuclease with 5'-flap endonuclease and 5'-3' exonuclease activities involved in DNA replication and repair. During DNA replication, cleaves the 5'-overhanging flap structure that is generated by displacement synthesis when DNA polymerase encounters the 5'-end of a downstream Okazaki fragment. Binds the unpaired 3'-DNA end and kinks the DNA to facilitate 5' cleavage specificity. Cleaves one nucleotide into the double-stranded DNA from the junction in flap DNA, leaving a nick for ligation. Also involved in the base excision repair (BER) pathway. Acts as a genome stabilization factor that prevents flaps from equilibrating into structures that lead to duplications and deletions. Also possesses 5'-3' exonuclease activity on nicked or gapped double-stranded DNA. The sequence is that of Flap endonuclease 1 from Thermococcus onnurineus (strain NA1).